Consider the following 131-residue polypeptide: EG45-like domain containing protein (131 aa).

The N-terminal stretch at 1 to 24 (MGVGTKVLVITTMAICLISSAAYA) is a signal peptide. Residues 27–131 (GTATFYTPPY…GKIKIEFNQA (105 aa)) form the Expansin-like EG45; incomplete domain. An intrachain disulfide couples Cys-73 to Cys-85.

In terms of tissue distribution, expressed in the outer layer of xylem and the vascular cambial zone of roots, in shoot cambium, but not in leaves.

Its subcellular location is the secreted. Its function is as follows. Might have a systemic role in water and solute homeostasis. Has no expansin-like activity. The sequence is that of EG45-like domain containing protein (CjBAp12) from Citrus jambhiri (Rough lemon).